We begin with the raw amino-acid sequence, 339 residues long: Anthranilate phosphoribosyltransferase (339 aa).

Residues Gly-81, 84-85 (GD), Ser-89, 91-94 (NVSS), 109-117 (KHGNRALSS), and Ala-121 contribute to the 5-phospho-alpha-D-ribose 1-diphosphate site. An anthranilate-binding site is contributed by Gly-81. Position 93 (Ser-93) interacts with Mg(2+). An anthranilate-binding site is contributed by Asn-112. Residue Arg-167 coordinates anthranilate. Asp-225 and Glu-226 together coordinate Mg(2+).

This sequence belongs to the anthranilate phosphoribosyltransferase family. As to quaternary structure, homodimer. Mg(2+) serves as cofactor.

It catalyses the reaction N-(5-phospho-beta-D-ribosyl)anthranilate + diphosphate = 5-phospho-alpha-D-ribose 1-diphosphate + anthranilate. It functions in the pathway amino-acid biosynthesis; L-tryptophan biosynthesis; L-tryptophan from chorismate: step 2/5. In terms of biological role, catalyzes the transfer of the phosphoribosyl group of 5-phosphorylribose-1-pyrophosphate (PRPP) to anthranilate to yield N-(5'-phosphoribosyl)-anthranilate (PRA). This chain is Anthranilate phosphoribosyltransferase, found in Brucella suis (strain ATCC 23445 / NCTC 10510).